Consider the following 467-residue polypeptide: Probable Xaa-Pro aminopeptidase SMAC_04549 (467 aa).

Mn(2+) is bound by residues aspartate 263, aspartate 274, glutamate 397, and glutamate 437.

The protein belongs to the peptidase M24B family. The cofactor is Mn(2+).

The catalysed reaction is Release of any N-terminal amino acid, including proline, that is linked to proline, even from a dipeptide or tripeptide.. In terms of biological role, catalyzes the removal of a penultimate prolyl residue from the N-termini of peptides. The chain is Probable Xaa-Pro aminopeptidase SMAC_04549 from Sordaria macrospora (strain ATCC MYA-333 / DSM 997 / K(L3346) / K-hell).